A 359-amino-acid chain; its full sequence is Chorismate synthase (359 aa).

Arg47 contacts NADP(+). FMN-binding positions include 123–125 (RSS), Gly283, 298–302 (KPTSS), and Arg326.

Belongs to the chorismate synthase family. In terms of assembly, homotetramer. Requires FMNH2 as cofactor.

The catalysed reaction is 5-O-(1-carboxyvinyl)-3-phosphoshikimate = chorismate + phosphate. It participates in metabolic intermediate biosynthesis; chorismate biosynthesis; chorismate from D-erythrose 4-phosphate and phosphoenolpyruvate: step 7/7. In terms of biological role, catalyzes the anti-1,4-elimination of the C-3 phosphate and the C-6 proR hydrogen from 5-enolpyruvylshikimate-3-phosphate (EPSP) to yield chorismate, which is the branch point compound that serves as the starting substrate for the three terminal pathways of aromatic amino acid biosynthesis. This reaction introduces a second double bond into the aromatic ring system. The chain is Chorismate synthase from Chlamydia felis (strain Fe/C-56) (Chlamydophila felis).